The primary structure comprises 377 residues: Peroxisomal membrane protein PEX14 (377 aa).

Residues 1 to 15 (MASSEQAEQPSQPSS) are compositionally biased toward low complexity. The tract at residues 1–24 (MASSEQAEQPSQPSSTPGSENVLP) is disordered. Position 2 is an N-acetylalanine (Ala2). Topologically, residues 2–108 (ASSEQAEQPS…YSPAGSRWRD (107 aa)) are peroxisomal matrix. Lys34 carries the post-translational modification N6-acetyllysine. A helical transmembrane segment spans residues 109–126 (YGALAIIMAGIAFGFHQL). The Cytoplasmic portion of the chain corresponds to 127–377 (YKKYLLPLIL…EGASNESERD (251 aa)). Positions 230-377 (PPSPSAPKIP…EGASNESERD (148 aa)) are disordered. Phosphoserine is present on Ser232. Composition is skewed to low complexity over residues 244–259 (PVKS…VNHH) and 265–275 (SPVSNESTSSS). Phosphoserine is present on residues Ser282 and Ser335. Residues 323–342 (KEDEEDEEDDDVSHVDEEDC) show a composition bias toward acidic residues. Basic and acidic residues predominate over residues 360–377 (QVEKLRRPEGASNESERD).

Belongs to the peroxin-14 family. As to quaternary structure, interacts with PEX13; forming the PEX13-PEX14 docking complex. Interacts with PEX5 (via WxxxF/Y motifs). Interacts with PEX19. Interacts with tubulin.

The protein localises to the peroxisome membrane. Component of the PEX13-PEX14 docking complex, a translocon channel that specifically mediates the import of peroxisomal cargo proteins bound to PEX5 receptor. The PEX13-PEX14 docking complex forms a large import pore which can be opened to a diameter of about 9 nm. Mechanistically, PEX5 receptor along with cargo proteins associates with the PEX14 subunit of the PEX13-PEX14 docking complex in the cytosol, leading to the insertion of the receptor into the organelle membrane with the concomitant translocation of the cargo into the peroxisome matrix. Plays a key role for peroxisome movement through a direct interaction with tubulin. The sequence is that of Peroxisomal membrane protein PEX14 from Homo sapiens (Human).